A 75-amino-acid polypeptide reads, in one-letter code: Pi-hexatoxin-Hi1d (75 aa).

Cystine bridges form between cysteine 3-cysteine 18, cysteine 10-cysteine 23, cysteine 17-cysteine 33, cysteine 40-cysteine 55, cysteine 47-cysteine 60, and cysteine 54-cysteine 71. Domain repeat units follow at residues 3–33 (CIRK…FEVC) and 40–71 (CLVK…SSVC). The segment at 3–71 (CIRKWLSCVD…KRSGNKSSVC (69 aa)) is 2 X approximate repeats with cysteine pattern C-C-CC-C-C.

Belongs to the psalmotoxin-1 family. Double-knot toxin subfamily. As to expression, expressed by the venom gland.

Its subcellular location is the secreted. In terms of biological role, this toxin potently and selectively inhibits ASIC1a, an isoform of the gene ASIC1. It incompletely inhibits ASIC1a activation in a pH-independent and slowly reversible manner. This toxin acts by binding to and stabilizing the closed state of the channel, thereby impeding the transition into a conducting state. This toxin may bind to the acidic pocket of ASIC1a, since mutation of a key residue of this pocket (Arg-350) abolishes the ability of the toxin to inhibit ASIC1a. In vivo, this toxin protects the brain from neuronal injury when administered up to 8 hours after stroke onset. The protein is Pi-hexatoxin-Hi1d of Hadronyche infensa (Fraser island funnel-web spider).